The sequence spans 285 residues: Putative ABC transporter ATP-binding protein CPE0195 (285 aa).

In terms of domain architecture, ABC transporter spans 6–242; it reads LKVEELNYNY…KEVIRKVNLR (237 aa). Residue 39 to 46 participates in ATP binding; that stretch reads GGNGVGKS.

The protein belongs to the ABC transporter superfamily.

Its subcellular location is the cell membrane. Functionally, probably part of an ABC transporter complex. Responsible for energy coupling to the transport system. This chain is Putative ABC transporter ATP-binding protein CPE0195, found in Clostridium perfringens (strain 13 / Type A).